Consider the following 291-residue polypeptide: MAVVGPTAGGKSDLGIEIALALGGEVVNADSMQLYRGMDIGTAKVPEAERRGVPHHLLDVWDVTHPADVASFQADARRIIDGLLAAGRIPVLVGGSGLYVRAVLDNLAFPGTDPGVRARWEEELARVGAPALHDRLAARAPQAAAAILPSNGRRIVRALEVVELTGTFTATLPEHRSVYEVVQIGVDRPDLDQRIADRVEKMWGAGFPDEVRRLVECGLREGRTASRALGYAQVLAWFDGAMDSAEQAKLATITATRRFARRQRSWFRRDNRIAWLDQPDVTQVRRLVGSL.

5 to 12 is an ATP binding site; the sequence is GPTAGGKS. Position 7–12 (7–12) interacts with substrate; that stretch reads TAGGKS. Positions 30–33 are interaction with substrate tRNA; it reads DSMQ.

Belongs to the IPP transferase family. Monomer. Mg(2+) serves as cofactor.

It carries out the reaction adenosine(37) in tRNA + dimethylallyl diphosphate = N(6)-dimethylallyladenosine(37) in tRNA + diphosphate. In terms of biological role, catalyzes the transfer of a dimethylallyl group onto the adenine at position 37 in tRNAs that read codons beginning with uridine, leading to the formation of N6-(dimethylallyl)adenosine (i(6)A). This Frankia casuarinae (strain DSM 45818 / CECT 9043 / HFP020203 / CcI3) protein is tRNA dimethylallyltransferase.